The sequence spans 314 residues: Beta-ketoacyl-[acyl-carrier-protein] synthase III (314 aa).

Catalysis depends on residues Cys-112 and His-241. The interval 242–246 is ACP-binding; it reads QANIR. Asn-271 is an active-site residue.

Belongs to the thiolase-like superfamily. FabH family. As to quaternary structure, homodimer.

The protein localises to the cytoplasm. It catalyses the reaction malonyl-[ACP] + acetyl-CoA + H(+) = 3-oxobutanoyl-[ACP] + CO2 + CoA. Its pathway is lipid metabolism; fatty acid biosynthesis. Functionally, catalyzes the condensation reaction of fatty acid synthesis by the addition to an acyl acceptor of two carbons from malonyl-ACP. Catalyzes the first condensation reaction which initiates fatty acid synthesis and may therefore play a role in governing the total rate of fatty acid production. Possesses both acetoacetyl-ACP synthase and acetyl transacylase activities. Its substrate specificity determines the biosynthesis of branched-chain and/or straight-chain of fatty acids. The chain is Beta-ketoacyl-[acyl-carrier-protein] synthase III from Vesicomyosocius okutanii subsp. Calyptogena okutanii (strain HA).